Reading from the N-terminus, the 560-residue chain is Arginine--tRNA ligase (560 aa).

The short motif at 122–132 (ANPNGPLHVGH) is the 'HIGH' region element.

Belongs to the class-I aminoacyl-tRNA synthetase family.

It is found in the cytoplasm. The enzyme catalyses tRNA(Arg) + L-arginine + ATP = L-arginyl-tRNA(Arg) + AMP + diphosphate. The chain is Arginine--tRNA ligase from Methanosphaera stadtmanae (strain ATCC 43021 / DSM 3091 / JCM 11832 / MCB-3).